The sequence spans 161 residues: Nucleotide-binding protein Pcar_0033 (161 aa).

Belongs to the YajQ family.

Functionally, nucleotide-binding protein. This chain is Nucleotide-binding protein Pcar_0033, found in Syntrophotalea carbinolica (strain DSM 2380 / NBRC 103641 / GraBd1) (Pelobacter carbinolicus).